Consider the following 293-residue polypeptide: Homoserine O-acetyltransferase (293 aa).

The active-site Acyl-thioester intermediate is Cys141. Residues Lys162 and Ser190 each coordinate substrate. Residue His234 is the Proton acceptor of the active site. Glu236 is a catalytic residue. Substrate is bound at residue Arg248.

Belongs to the MetA family.

It is found in the cytoplasm. The catalysed reaction is L-homoserine + acetyl-CoA = O-acetyl-L-homoserine + CoA. Its pathway is amino-acid biosynthesis; L-methionine biosynthesis via de novo pathway; O-acetyl-L-homoserine from L-homoserine: step 1/1. Functionally, transfers an acetyl group from acetyl-CoA to L-homoserine, forming acetyl-L-homoserine. The chain is Homoserine O-acetyltransferase from Campylobacter jejuni subsp. jejuni serotype O:2 (strain ATCC 700819 / NCTC 11168).